The chain runs to 308 residues: MNPPSSIKHYLQFKDFSLEEYEYLLDRSAILKAKFKNYETWHPLHDRTLAMIFEKNSTRTRLSFEAGIHQLGGHAVFLNTRDSQLGRGEPIEDAAQVISRMTDIIMIRTFGQEIIERFAAHSRVPVINGLTNEYHPCQVLADIFTFIEQRGPIKGKTVTWVGDANNMAYTWVQAAEILGFRFHFSAPKGYQLDPAMVADSALPFVHVFENPLEACDGAHLVTTDVWTSMGYEAENEARKKAFGDWMVTEAMMQRAQPDALFMHCLPAHRGEEVEAAVIDGKQSVVWDEAENRLHVQKALMEYLLCGRY.

Carbamoyl phosphate-binding positions include 57–60 (STRT), Gln84, Arg108, and 135–138 (HPCQ). L-ornithine-binding positions include Asn166, Asp224, and 228-229 (SM). Residues 264–265 (CL) and Arg292 contribute to the carbamoyl phosphate site.

It belongs to the aspartate/ornithine carbamoyltransferase superfamily. OTCase family.

It is found in the cytoplasm. The enzyme catalyses carbamoyl phosphate + L-ornithine = L-citrulline + phosphate + H(+). The protein operates within amino-acid degradation; L-arginine degradation via ADI pathway; carbamoyl phosphate from L-arginine: step 2/2. Functionally, reversibly catalyzes the transfer of the carbamoyl group from carbamoyl phosphate (CP) to the N(epsilon) atom of ornithine (ORN) to produce L-citrulline. The chain is Ornithine carbamoyltransferase from Ralstonia pickettii (strain 12J).